Consider the following 87-residue polypeptide: Tan_10cys (87 aa).

Residues 1 to 21 (MNLKVLFLLAMVLVTLCLGED) form the signal peptide. Positions 22-27 (RVTDRR) are excised as a propeptide.

This sequence belongs to the teretoxin C (TC) superfamily. Contains 5 disulfide bonds. As to expression, expressed by the venom duct.

Its subcellular location is the secreted. In Terebra anilis (Auger snail), this protein is Tan_10cys.